The sequence spans 33 residues: Toxin Bcg III 25.52 (33 aa).

A disulfide bridge connects residues Cys-6 and Cys-28.

It is found in the secreted. The protein localises to the nematocyst. This Bunodosoma cangicum (Sea anemone) protein is Toxin Bcg III 25.52.